Reading from the N-terminus, the 206-residue chain is RNA pyrophosphohydrolase (206 aa).

Residues 6–149 (GYRPNVGIVL…KRGVYARALR (144 aa)) form the Nudix hydrolase domain. A Nudix box motif is present at residues 38-59 (GGMNTDETPVEAMYRELQEETG). The tract at residues 175 to 206 (MPGHTAGHDRPRKRPRTRGYWPKKATGDGPAS) is disordered.

It belongs to the Nudix hydrolase family. RppH subfamily. It depends on a divalent metal cation as a cofactor.

In terms of biological role, accelerates the degradation of transcripts by removing pyrophosphate from the 5'-end of triphosphorylated RNA, leading to a more labile monophosphorylated state that can stimulate subsequent ribonuclease cleavage. The polypeptide is RNA pyrophosphohydrolase (Stenotrophomonas maltophilia (strain K279a)).